The following is a 109-amino-acid chain: Flagellar hook-basal body complex protein FliE (109 aa).

It belongs to the FliE family.

It is found in the bacterial flagellum basal body. The polypeptide is Flagellar hook-basal body complex protein FliE (Pseudomonas fluorescens (strain Pf0-1)).